The sequence spans 331 residues: Major outer membrane protein P.IB (331 aa).

An N-terminal signal peptide occupies residues 1–19 (MKKSLIALTLAALPVAAMA).

Belongs to the Gram-negative porin family. As to quaternary structure, homotrimer.

It is found in the cell outer membrane. Functionally, serves as a slightly cation selective porin. The chain is Major outer membrane protein P.IB (porB) from Neisseria meningitidis serogroup B.